We begin with the raw amino-acid sequence, 760 residues long: H(+)/Cl(-) exchange transporter 4 (760 aa).

The Cytoplasmic portion of the chain corresponds to 1–67; it reads MVNAGAMSGS…WEFIKSLLDA (67 aa). A required for localization in the endoplasmic reticulum region spans residues 14–63; that stretch reads MDFLDEPFPDVGTYEDFHTIDWLREKSRDTDRHRKITSKSKESIWEFIKS. The next 2 helical transmembrane spans lie at 68-105 and 151-174; these read WSGW…VCLS and LNYL…VRVF. The Selectivity filter part_1 signature appears at 180 to 184; the sequence is GSGIP. S181 serves as a coordination point for chloride. Residues 183-190 constitute an intramembrane region (helical); the sequence is IPEIKTIL. The next 2 membrane-spanning stretches (helical) occupy residues 200-218 and 224-243; these read GKWT…VSSG and EGPL…SLFS. A Selectivity filter part_2 motif is present at residues 222 to 226; sequence GKEGP. 2 intramembrane regions (helical) span residues 255 to 267 and 271 to 279; these read VLSA…VSVA and PIGGVLFSL. Helical transmembrane passes span 291 to 309, 333 to 358, 365 to 385, 442 to 462, and 467 to 486; these read LWRS…RSIN, FPFI…AWCR, LGKY…IIAY, MWQL…TFGM, and GLFI…VGIG. The short motif at 467 to 471 is the Selectivity filter part_3 element; sequence GLFIP. F469 provides a ligand contact to chloride. Intramembrane regions (helical) lie at residues 514–528 and 532–543; these read GLYA…LGGV and TVSLVVIMFELT. An intramembrane region (note=Loop between two helices) is located at residues 544–547; the sequence is GGLE. A helical transmembrane segment spans residues 548-566; the sequence is YIVPLMAAAVTSKWVADAF. At 567 to 760 the chain is on the cytoplasmic side; the sequence is GKEGIYEAHI…NQDPESIMFN (194 aa). Residue Y572 participates in chloride binding. Residues 600-666 enclose the CBS 1 domain; it reads MRPRRGEPPL…AIKNARQRQE (67 aa). ATP-binding positions include S610 and 631 to 633; that span reads YNG. The required for localization in the endoplasmic reticulum stretch occupies residues 667–696; that stretch reads GIVSNSIMYFTEEPPELPANSPHPLKLRRI. Positions 697–755 constitute a CBS 2 domain; that stretch reads LNLSPFTVTDHTPMETVVDIFRKLGLRQCLVTRSGRLLGIITKKDVLRHMAQMANQDPE. An ATP-binding site is contributed by 738–741; sequence TKKD.

The protein belongs to the chloride channel (TC 2.A.49) family. ClC-4/CLCN4 subfamily. In terms of assembly, monomer. Forms heterodimers with CLCN3. As to expression, abundant in skeletal muscle and also detectable in brain and heart.

It is found in the early endosome membrane. The protein localises to the late endosome membrane. The protein resides in the endoplasmic reticulum membrane. It localises to the lysosome membrane. Its subcellular location is the recycling endosome membrane. In terms of biological role, strongly outwardly rectifying, electrogenic H(+)/Cl(-)exchanger which mediates the exchange of chloride ions against protons. The CLC channel family contains both chloride channels and proton-coupled anion transporters that exchange chloride or another anion for protons. The presence of conserved gating glutamate residues is typical for family members that function as antiporters. This is H(+)/Cl(-) exchange transporter 4 (CLCN4) from Homo sapiens (Human).